The chain runs to 401 residues: tRNA-specific 2-thiouridylase MnmA (401 aa).

Residues 13–20 and Met39 each bind ATP; that span reads GLSGGVDS. Residues 99–101 form an interaction with target base in tRNA region; that stretch reads NPD. Cys104 acts as the Nucleophile in catalysis. Cys104 and Cys202 are disulfide-bonded. Residue Gly128 coordinates ATP. An interaction with tRNA region spans residues 152–154; sequence KDQ. Cys202 (cysteine persulfide intermediate) is an active-site residue. Positions 329–330 are interaction with tRNA; it reads RY.

This sequence belongs to the MnmA/TRMU family.

It localises to the cytoplasm. It carries out the reaction S-sulfanyl-L-cysteinyl-[protein] + uridine(34) in tRNA + AH2 + ATP = 2-thiouridine(34) in tRNA + L-cysteinyl-[protein] + A + AMP + diphosphate + H(+). Its function is as follows. Catalyzes the 2-thiolation of uridine at the wobble position (U34) of tRNA, leading to the formation of s(2)U34. This is tRNA-specific 2-thiouridylase MnmA from Polaromonas sp. (strain JS666 / ATCC BAA-500).